A 70-amino-acid chain; its full sequence is Small, acid-soluble spore protein 1 (70 aa).

The protein belongs to the alpha/beta-type SASP family.

In terms of biological role, SASP are bound to spore DNA. They are double-stranded DNA-binding proteins that cause DNA to change to an a-like conformation. They protect the DNA backbone from chemical and enzymatic cleavage and are thus involved in dormant spore's high resistance to UV light. This Bacillus subtilis protein is Small, acid-soluble spore protein 1.